Consider the following 270-residue polypeptide: MPELPEVETTRRGIAPHLEGQRVSRVIVRDGRLRWPVPEDLDIRLSGQRIVQVSRRAKYLLIQAEVGTLISHLGMSGNLRLVEAGLAALKHEHVDIELESGLALRYTDPRRFGAMLWSHDPHNHELLIRLGPEPLTDLFDGERLYERSRGKSIAVKPFIMDNAVVVGVGNIYATEALFAAGIDPRREARGISRARYLKLAIEIKRILAYAIERGGTTLRDFIGGDGKPGYFQQELFAYGRGGQPCKVCGTTLREIKLGQRASVYCPKCQR.

Proline 2 functions as the Schiff-base intermediate with DNA in the catalytic mechanism. Residue glutamate 3 is the Proton donor of the active site. Residue lysine 58 is the Proton donor; for beta-elimination activity of the active site. 3 residues coordinate DNA: histidine 91, arginine 110, and lysine 151. The FPG-type zinc-finger motif lies at 236-270 (FAYGRGGQPCKVCGTTLREIKLGQRASVYCPKCQR). The Proton donor; for delta-elimination activity role is filled by arginine 260.

It belongs to the FPG family. As to quaternary structure, monomer. Zn(2+) is required as a cofactor.

It catalyses the reaction Hydrolysis of DNA containing ring-opened 7-methylguanine residues, releasing 2,6-diamino-4-hydroxy-5-(N-methyl)formamidopyrimidine.. It carries out the reaction 2'-deoxyribonucleotide-(2'-deoxyribose 5'-phosphate)-2'-deoxyribonucleotide-DNA = a 3'-end 2'-deoxyribonucleotide-(2,3-dehydro-2,3-deoxyribose 5'-phosphate)-DNA + a 5'-end 5'-phospho-2'-deoxyribonucleoside-DNA + H(+). Functionally, involved in base excision repair of DNA damaged by oxidation or by mutagenic agents. Acts as a DNA glycosylase that recognizes and removes damaged bases. Has a preference for oxidized purines, such as 7,8-dihydro-8-oxoguanine (8-oxoG). Has AP (apurinic/apyrimidinic) lyase activity and introduces nicks in the DNA strand. Cleaves the DNA backbone by beta-delta elimination to generate a single-strand break at the site of the removed base with both 3'- and 5'-phosphates. The polypeptide is Formamidopyrimidine-DNA glycosylase (Pseudomonas syringae pv. tomato (strain ATCC BAA-871 / DC3000)).